The following is an 864-amino-acid chain: Nitrate reductase [NADH] (864 aa).

Position 139 (C139) interacts with Mo-molybdopterin. The region spanning 497–572 is the Cytochrome b5 heme-binding domain; sequence PRQYTMEEVA…LAQYYIGDLV (76 aa). The heme site is built by H532 and H555. An FAD-binding FR-type domain is found at 606–718; it reads RQKVKLPLIE…KGPLGHFVYD (113 aa). Residues 658 to 661, 675 to 679, F680, F687, 692 to 694, and T746 contribute to the FAD site; these read RAYT, LIKVY, and KMS.

Belongs to the nitrate reductase family. Homodimer. The cofactor is FAD. It depends on heme as a cofactor. Mo-molybdopterin is required as a cofactor.

The catalysed reaction is nitrite + NAD(+) + H2O = nitrate + NADH + H(+). Nitrate reductase is a key enzyme involved in the first step of nitrate assimilation in plants, fungi and bacteria. This is Nitrate reductase [NADH] (NITA) from Volvox carteri (Green alga).